A 101-amino-acid chain; its full sequence is Large ribosomal subunit protein bL27 (101 aa).

Residues 1–9 (MLLMNLQLF) constitute a propeptide that is removed on maturation.

The protein belongs to the bacterial ribosomal protein bL27 family. The N-terminus is cleaved by ribosomal processing cysteine protease Prp.

The sequence is that of Large ribosomal subunit protein bL27 from Clostridium tetani (strain Massachusetts / E88).